The chain runs to 360 residues: Probable dual-specificity RNA methyltransferase RlmN (360 aa).

The active-site Proton acceptor is glutamate 91. The Radical SAM core domain maps to 97–335 (QHYGQSVCVT…CVVRQEHGTD (239 aa)). Cysteines 104 and 340 form a disulfide. Cysteine 111, cysteine 115, and cysteine 118 together coordinate [4Fe-4S] cluster. Residues 163–164 (GE), serine 195, 218–220 (SLH), and asparagine 296 each bind S-adenosyl-L-methionine. Cysteine 340 serves as the catalytic S-methylcysteine intermediate.

Belongs to the radical SAM superfamily. RlmN family. [4Fe-4S] cluster is required as a cofactor.

The protein localises to the cytoplasm. The catalysed reaction is adenosine(2503) in 23S rRNA + 2 reduced [2Fe-2S]-[ferredoxin] + 2 S-adenosyl-L-methionine = 2-methyladenosine(2503) in 23S rRNA + 5'-deoxyadenosine + L-methionine + 2 oxidized [2Fe-2S]-[ferredoxin] + S-adenosyl-L-homocysteine. The enzyme catalyses adenosine(37) in tRNA + 2 reduced [2Fe-2S]-[ferredoxin] + 2 S-adenosyl-L-methionine = 2-methyladenosine(37) in tRNA + 5'-deoxyadenosine + L-methionine + 2 oxidized [2Fe-2S]-[ferredoxin] + S-adenosyl-L-homocysteine. Functionally, specifically methylates position 2 of adenine 2503 in 23S rRNA and position 2 of adenine 37 in tRNAs. The protein is Probable dual-specificity RNA methyltransferase RlmN of Streptococcus equi subsp. zooepidemicus (strain MGCS10565).